A 48-amino-acid polypeptide reads, in one-letter code: Large ribosomal subunit protein bL32 (48 aa).

The disordered stretch occupies residues methionine 1 to tyrosine 20. The span at serine 9–tyrosine 20 shows a compositional bias: basic residues.

This sequence belongs to the bacterial ribosomal protein bL32 family.

This chain is Large ribosomal subunit protein bL32, found in Helicobacter acinonychis (strain Sheeba).